A 273-amino-acid chain; its full sequence is Giardin subunit beta (273 aa).

The tract at residues methionine 1 to aspartate 19 is nonhelical region. Residues leucine 20 to glutamine 273 form a rod region. Coiled-coil stretches lie at residues aspartate 123–leucine 175 and asparagine 211–glutamine 263.

The protein belongs to the SF-assemblin family. As to quaternary structure, interacts with BOP1 (via C-terminal WD repeats).

It localises to the cytoplasm. Its subcellular location is the cytoskeleton. Giardins are involved in parasite attachment to the intestinal mucosa and in the cytoskeletal disassembly and reassembly that marks the transition from infectious trophozoite to transmissible cyst. They may interact with other cytoskeletal proteins such as microtubules in the microribbons or crossbridges, to maintain the integrity of the ventral disk. In Giardia intestinalis (Giardia lamblia), this protein is Giardin subunit beta.